The chain runs to 188 residues: Ribosome biogenesis protein RLP24 (188 aa).

Residues 140-188 form a disordered region; sequence ELRRMQEAGEDDDDEDMSEMEVSEEEESEEEREKVEIALKSKSKRKMRA. A compositionally biased stretch (acidic residues) spans 147 to 169; sequence AGEDDDDEDMSEMEVSEEEESEE.

This sequence belongs to the eukaryotic ribosomal protein eL24 family. Associated with nucleolar and cytoplasmic pre-60S particles. At the end of biogenesis it dissociates from cytoplasmic pre-60S particles and is likely to be exchanged for its ribosomal homolog, RPL24.

The protein localises to the cytoplasm. It is found in the nucleus. Functionally, involved in the biogenesis of the 60S ribosomal subunit. Ensures the docking of YALI0_B00990g/NOG1 to pre-60S particles. Activates and recruits ATPase AFG2 to cytoplasmic pre-60S ribosomal particles. The chain is Ribosome biogenesis protein RLP24 (RLP24) from Yarrowia lipolytica (strain CLIB 122 / E 150) (Yeast).